Here is a 456-residue protein sequence, read N- to C-terminus: Potassium voltage-gated channel subfamily A member 7 (456 aa).

A helical transmembrane segment spans residues 144–164 (VLAVVSVLVILVSIVVFCLET). Asn191 carries N-linked (GlcNAc...) asparagine glycosylation. A helical membrane pass occupies residues 209-229 (FFVVETLCICWFSFELLVRLL). Cys231 is lipidated: S-palmitoyl cysteine. The helical transmembrane segment at 241 to 261 (VMNLIDFVAILPYFVALGTEL) threads the bilayer. The helical; Voltage-sensor transmembrane segment at 276 to 295 (ILRVIRLVRVFRIFKLSRHS) threads the bilayer. Residues 312 to 332 (LGLLIFFLFIGVVLFSSAVYF) form a helical membrane-spanning segment. The Selectivity filter motif lies at 358–363 (TVGYGD). Residues 373-393 (IVGSLCAIAGVLTISLPVPVI) form a helical membrane-spanning segment.

The protein belongs to the potassium channel family. A (Shaker) (TC 1.A.1.2) subfamily. Kv1.7/KCNA7 sub-subfamily. Heterotetramer of potassium channel proteins. Highly expressed in skeletal muscle, heart and kidney.

The protein localises to the membrane. It carries out the reaction K(+)(in) = K(+)(out). Functionally, mediates the voltage-dependent potassium ion permeability of excitable membranes. Assuming opened or closed conformations in response to the voltage difference across the membrane, the protein forms a potassium-selective channel through which potassium ions may pass in accordance with their electrochemical gradient. In Homo sapiens (Human), this protein is Potassium voltage-gated channel subfamily A member 7 (KCNA7).